Consider the following 89-residue polypeptide: Small ribosomal subunit protein uS15 (89 aa).

It belongs to the universal ribosomal protein uS15 family. In terms of assembly, part of the 30S ribosomal subunit. Forms a bridge to the 50S subunit in the 70S ribosome, contacting the 23S rRNA.

Its function is as follows. One of the primary rRNA binding proteins, it binds directly to 16S rRNA where it helps nucleate assembly of the platform of the 30S subunit by binding and bridging several RNA helices of the 16S rRNA. Forms an intersubunit bridge (bridge B4) with the 23S rRNA of the 50S subunit in the ribosome. The polypeptide is Small ribosomal subunit protein uS15 (Porphyromonas gingivalis (strain ATCC 33277 / DSM 20709 / CIP 103683 / JCM 12257 / NCTC 11834 / 2561)).